Here is a 58-residue protein sequence, read N- to C-terminus: U-scoloptoxin(14)-Sa1a (58 aa).

A signal peptide spans methionine 1–alanine 18.

It belongs to the scoloptoxin-14 family. In terms of processing, contains 4 disulfide bonds. As to expression, expressed by the venom gland.

It localises to the secreted. The polypeptide is U-scoloptoxin(14)-Sa1a (Scolopendra alternans (Florida Keys giant centipede)).